The chain runs to 311 residues: tRNA-cytidine(32) 2-sulfurtransferase (311 aa).

The PP-loop motif signature appears at 47–52; the sequence is SGGKDS. Residues Cys122, Cys125, and Cys213 each coordinate [4Fe-4S] cluster.

Belongs to the TtcA family. As to quaternary structure, homodimer. It depends on Mg(2+) as a cofactor. [4Fe-4S] cluster is required as a cofactor.

It localises to the cytoplasm. It carries out the reaction cytidine(32) in tRNA + S-sulfanyl-L-cysteinyl-[cysteine desulfurase] + AH2 + ATP = 2-thiocytidine(32) in tRNA + L-cysteinyl-[cysteine desulfurase] + A + AMP + diphosphate + H(+). Its pathway is tRNA modification. Catalyzes the ATP-dependent 2-thiolation of cytidine in position 32 of tRNA, to form 2-thiocytidine (s(2)C32). The sulfur atoms are provided by the cysteine/cysteine desulfurase (IscS) system. The polypeptide is tRNA-cytidine(32) 2-sulfurtransferase (Shigella dysenteriae serotype 1 (strain Sd197)).